The primary structure comprises 158 residues: Low molecular weight phosphotyrosine protein phosphatase (158 aa).

Ala-2 carries the post-translational modification N-acetylalanine. Cys-13 functions as the Nucleophile in the catalytic mechanism. Arg-19 is a catalytic residue. Asp-130 acts as the Proton donor in catalysis. Residues Tyr-132 and Tyr-133 each carry the phosphotyrosine modification.

It belongs to the low molecular weight phosphotyrosine protein phosphatase family. As to quaternary structure, interacts with EPHA2; dephosphorylates EPHA2. Interacts with EPHB1. In terms of assembly, interacts with the SH3 domain of SPTAN1. There is no interaction observed for isoforms 2 or 3. In terms of processing, phosphorylated by LCK. Phosphorylation at Tyr-132 increases its phosphatase activity. Not phosphorylated. As to expression, expressed in T-lymphocytes.

Its subcellular location is the cytoplasm. It carries out the reaction O-phospho-L-tyrosyl-[protein] + H2O = L-tyrosyl-[protein] + phosphate. The enzyme catalyses a phosphate monoester + H2O = an alcohol + phosphate. With respect to regulation, inhibited by sulfhydryl reagents. In terms of biological role, acts on tyrosine phosphorylated proteins, low-MW aryl phosphates and natural and synthetic acyl phosphates with differences in substrate specificity between isoform 1 and isoform 2. Does not possess phosphatase activity. This chain is Low molecular weight phosphotyrosine protein phosphatase, found in Homo sapiens (Human).